Consider the following 153-residue polypeptide: Transcriptional repressor NrdR (153 aa).

A zinc finger spans residues 3–34 (CPSCHHSGTRVLESRPVEEGRSIRRRRECEQC). The ATP-cone domain occupies 49–139 (LIVVKKEGTR…VYRQFKDINV (91 aa)).

Belongs to the NrdR family. Zn(2+) serves as cofactor.

In terms of biological role, negatively regulates transcription of bacterial ribonucleotide reductase nrd genes and operons by binding to NrdR-boxes. In Geobacillus kaustophilus (strain HTA426), this protein is Transcriptional repressor NrdR.